An 812-amino-acid chain; its full sequence is MRLSRQLLRSTPFLTRAKPVSGKVSHFRSRTDLKGGSSNSSKSPDSVGDGASAHLRHIFDDQKYFNSFTKSAAETSGKVSSLPAIFSFRRSGLFCNDNLSTPHGLIDFSKNSLREAKSLVESMLHDVKSDPAGRLSYINKLDQLSDILCRVIDVAEFIRVAHPSQKWVNAAQQTHEIMFEYMNQLNTNVELYQNLRDILSDSSVTAQLTEEEIQVGEYLKQDFERSGIHMNPSARNNFVAITQEISLLGSRFNNEIHNLKSYWCEIPRYEFEQLEDSNLKKEILGYQSKAPPSKHSSQTISIPLVGHIPFTILTTCSIESIRREIWISLHNSSDEQIATLNNFLKYRATLAKMLGYKSFSHYQLEHKMAKNPENVVTFLTNLQKSLREKGVTEEIKKLYQYRDDSTISQVQKASTEDIIDGVKPWDRDYLLEKLQKASNKNLEELENINEYLSVGTIVAGLSELFKSIYNVEFVPVATLKGETWDQNQVRKVAVVDDSTKKKLGFLYLDFWSPKVLPSHFTIVCSRKLNLDIKSETKDKMRQLVQLDEDETSQLPVISLICNFQKSNDGHIGRFAGVENEKPTLLSLNQVDTVFHEMGHAMHSMIGRTDLHNLSGTRCATDFVELPSVLMESFSKDPRVLCKIAKHYETGEPLSPKLLAQHQTQKVMLDECETYMQSKMAMLDQVLHSEDVVRTISEDFANFDSTPIYHSLESKLKVFADTWSTWHGKFPHLFSYGAVYYSYLLDRAIAEKIWNGLFAHDPWSREAGEKYKNSILKWGGTRDPWECLADALENDELSKGDSRAMEIIGKDSL.

The transit peptide at 1–29 (MRLSRQLLRSTPFLTRAKPVSGKVSHFRS) directs the protein to the mitochondrion. Positions 19–49 (PVSGKVSHFRSRTDLKGGSSNSSKSPDSVGD) are disordered. A compositionally biased stretch (low complexity) spans 37 to 46 (SSNSSKSPDS). His-595 is a Zn(2+) binding site. Residue Glu-596 is part of the active site. Residues His-599 and His-602 each coordinate Zn(2+).

The protein belongs to the peptidase M3 family. The cofactor is Zn(2+).

Its subcellular location is the mitochondrion matrix. The catalysed reaction is Release of an N-terminal octapeptide as second stage of processing of some proteins imported into the mitochondrion.. In terms of biological role, cleaves proteins, imported into the mitochondrion, to their mature size. While most mitochondrial precursor proteins are processed to the mature form in one step by mitochondrial processing peptidase (MPP), the sequential cleavage by MIP of an octapeptide after initial processing by MPP is a required step for a subgroup of nuclear-encoded precursor proteins destined for the matrix or the inner membrane. In Scheffersomyces stipitis (strain ATCC 58785 / CBS 6054 / NBRC 10063 / NRRL Y-11545) (Yeast), this protein is Mitochondrial intermediate peptidase (OCT1).